The sequence spans 166 residues: Putative membrane protein 162 (166 aa).

Met1 is a topological domain (intravirion). Residues Tyr2–Phe22 traverse the membrane as a helical segment. Residues Leu23–Leu166 are Virion surface-facing.

Belongs to the asfivirus envelope protein p22 family.

It localises to the virion membrane. Its subcellular location is the host cell membrane. This African swine fever virus (isolate Tick/Malawi/Lil 20-1/1983) (ASFV) protein is Putative membrane protein 162.